Here is a 197-residue protein sequence, read N- to C-terminus: Imidazoleglycerol-phosphate dehydratase (197 aa).

Belongs to the imidazoleglycerol-phosphate dehydratase family.

The protein localises to the cytoplasm. It catalyses the reaction D-erythro-1-(imidazol-4-yl)glycerol 3-phosphate = 3-(imidazol-4-yl)-2-oxopropyl phosphate + H2O. Its pathway is amino-acid biosynthesis; L-histidine biosynthesis; L-histidine from 5-phospho-alpha-D-ribose 1-diphosphate: step 6/9. This is Imidazoleglycerol-phosphate dehydratase from Azotobacter vinelandii (strain DJ / ATCC BAA-1303).